The primary structure comprises 377 residues: D-alanine--D-alanine ligase (377 aa).

The ATP-grasp domain maps to 140 to 349; sequence KELLTVNGIR…NAKLVDMLID (210 aa). 170–225 serves as a coordination point for ATP; sequence VAELGNIVFVKAANQGSSVGISRVTNAEEYTEALSDSFQYDYKVLIEEAVNGAREL. 3 residues coordinate Mg(2+): aspartate 303, glutamate 316, and asparagine 318.

It belongs to the D-alanine--D-alanine ligase family. It depends on Mg(2+) as a cofactor. The cofactor is Mn(2+).

Its subcellular location is the cytoplasm. It catalyses the reaction 2 D-alanine + ATP = D-alanyl-D-alanine + ADP + phosphate + H(+). The protein operates within cell wall biogenesis; peptidoglycan biosynthesis. Functionally, cell wall formation. This is D-alanine--D-alanine ligase from Leuconostoc mesenteroides.